A 168-amino-acid polypeptide reads, in one-letter code: S-ribosylhomocysteine lyase (168 aa).

Positions 54, 58, and 128 each coordinate Fe cation.

It belongs to the LuxS family. As to quaternary structure, homodimer. It depends on Fe cation as a cofactor.

The enzyme catalyses S-(5-deoxy-D-ribos-5-yl)-L-homocysteine = (S)-4,5-dihydroxypentane-2,3-dione + L-homocysteine. Involved in the synthesis of autoinducer 2 (AI-2) which is secreted by bacteria and is used to communicate both the cell density and the metabolic potential of the environment. The regulation of gene expression in response to changes in cell density is called quorum sensing. Catalyzes the transformation of S-ribosylhomocysteine (RHC) to homocysteine (HC) and 4,5-dihydroxy-2,3-pentadione (DPD). This Actinobacillus succinogenes (strain ATCC 55618 / DSM 22257 / CCUG 43843 / 130Z) protein is S-ribosylhomocysteine lyase.